Consider the following 216-residue polypeptide: MGGNQILKQIIAKHLLDIQAVFLRPNEPFTWASGILSPIYCDNRLTLSFPEVRNDVASGISKLVKEHFPEAEMIAGTATAGIPHAALAADHLNLPMCYVRSKPKAHGKGNQIEGAVQEGQKTVVIEDLISTGGSVLEACAALQAAGCEVLGVVSIFTYGLPKAEEAFAKAELPYYSLTDYDTLTEVALENGNIHSDDLKKLQTWKRNPESKDWFKK.

5-phospho-alpha-D-ribose 1-diphosphate is bound by residues R100, K104, H106, and 126 to 134 (EDLISTGGS). Residue S130 coordinates orotate.

This sequence belongs to the purine/pyrimidine phosphoribosyltransferase family. PyrE subfamily. In terms of assembly, homodimer. Interacts with BrxC. Mg(2+) is required as a cofactor.

The catalysed reaction is orotidine 5'-phosphate + diphosphate = orotate + 5-phospho-alpha-D-ribose 1-diphosphate. The protein operates within pyrimidine metabolism; UMP biosynthesis via de novo pathway; UMP from orotate: step 1/2. Functionally, catalyzes the transfer of a ribosyl phosphate group from 5-phosphoribose 1-diphosphate to orotate, leading to the formation of orotidine monophosphate (OMP). This chain is Orotate phosphoribosyltransferase, found in Bacillus subtilis (strain 168).